A 173-amino-acid chain; its full sequence is Globin-like host-protective antigen (173 aa).

The N-terminal stretch at methionine 1–alanine 15 is a signal peptide. A Globin domain is found at alanine 25 to alanine 166. Histidine 114 lines the heme b pocket.

The protein belongs to the globin family.

The protein resides in the secreted. It is found in the extracellular space. Its function is as follows. May be a globin and may play a role in oxygen transport. This Trichostrongylus colubriformis (Black scour worm) protein is Globin-like host-protective antigen.